The following is a 345-amino-acid chain: Quinolinate synthase (345 aa).

Residues H69 and S87 each coordinate iminosuccinate. Residue C132 coordinates [4Fe-4S] cluster. Residues 158 to 160 (YVN) and S175 each bind iminosuccinate. C217 lines the [4Fe-4S] cluster pocket. Residues 243–245 (HPE) and T260 contribute to the iminosuccinate site. C303 is a [4Fe-4S] cluster binding site.

Belongs to the quinolinate synthase family. Type 2 subfamily. [4Fe-4S] cluster serves as cofactor.

The protein resides in the cytoplasm. The catalysed reaction is iminosuccinate + dihydroxyacetone phosphate = quinolinate + phosphate + 2 H2O + H(+). Its pathway is cofactor biosynthesis; NAD(+) biosynthesis; quinolinate from iminoaspartate: step 1/1. In terms of biological role, catalyzes the condensation of iminoaspartate with dihydroxyacetone phosphate to form quinolinate. This is Quinolinate synthase from Agrobacterium fabrum (strain C58 / ATCC 33970) (Agrobacterium tumefaciens (strain C58)).